A 196-amino-acid polypeptide reads, in one-letter code: MEKFTIYTGTTVPLMNDNIDTDQILPKQFLKLIDKKGFGKYLMYAWRYLDNQYTEDPDFVFNRPEYRKATILITGDNFGAGSSREHAAWALADYGFKVVIAGSFGDIHYNNELNNGMLPIVQPLEVRQALANLKPTDQVTVDLEQQKIFSPVGEFSFDIDGEWKHKLLNGLDDIGITLQYEDLITEYEKNRPSYWQ.

The protein belongs to the LeuD family. LeuD type 1 subfamily. Heterodimer of LeuC and LeuD.

The catalysed reaction is (2R,3S)-3-isopropylmalate = (2S)-2-isopropylmalate. Its pathway is amino-acid biosynthesis; L-leucine biosynthesis; L-leucine from 3-methyl-2-oxobutanoate: step 2/4. In terms of biological role, catalyzes the isomerization between 2-isopropylmalate and 3-isopropylmalate, via the formation of 2-isopropylmaleate. This Streptococcus sanguinis (strain SK36) protein is 3-isopropylmalate dehydratase small subunit.